We begin with the raw amino-acid sequence, 486 residues long: Serralysin (486 aa).

His-187 provides a ligand contact to Zn(2+). Glu-188 is a catalytic residue. Residues His-191 and His-197 each coordinate Zn(2+). Ca(2+)-binding residues include Arg-266, Asp-269, Asp-298, Gly-300, Gly-301, Asp-303, Thr-340, and Glu-342. Hemolysin-type calcium-binding repeat units lie at residues 345–362 and 363–380; these read IGGS…ANTL and KGGA…ADNL.

It belongs to the peptidase M10B family. The cofactor is Zn(2+). Ca(2+) is required as a cofactor.

It localises to the secreted. The catalysed reaction is Preferential cleavage of bonds with hydrophobic residues in P1'.. This is Serralysin (prtA1) from Photorhabdus luminescens (Xenorhabdus luminescens).